The sequence spans 362 residues: Very-long-chain (3R)-3-hydroxyacyl-CoA dehydratase 3 (362 aa).

N-acetylmethionine is present on methionine 1. Topologically, residues 1-149 (MENQVLTPHV…ETLTNLRKGY (149 aa)) are cytoplasmic. The 90-residue stretch at 5–94 (VLTPHVYWAQ…KVSQWWERLT (90 aa)) folds into the CS domain. The residue at position 7 (threonine 7) is a Phosphothreonine. Residues 111–136 (LDESDAEMELRAKEEERLNKLRLESE) are a coiled coil. A phosphoserine mark is found at serine 114 and serine 135. The chain crosses the membrane as a helical span at residues 150 to 170 (LFMYNLVQFLGFSWIFVNLTV). Residues 171–185 (RFCILGKESFYDTFH) are Lumenal-facing. Residues 186 to 207 (TVADMMYFCQMLAVVETINAAI) traverse the membrane as a helical segment. Residues 208-217 (GVTTSPVLPS) are Cytoplasmic-facing. The helical transmembrane segment at 218–235 (LIQLLGRNFILFIIFGTM) threads the bilayer. The Lumenal segment spans residues 236–241 (EEMQNK). A helical membrane pass occupies residues 242–256 (AVVFFVFYLWSAIEI). Topologically, residues 257–279 (FRYSFYMLTCIDMDWKVLTWLRY) are cytoplasmic. Residues 280-298 (TLWIPLYPLGCLAEAVSVI) traverse the membrane as a helical segment. Active-site residues include tyrosine 286 and glutamate 293. Topologically, residues 299 to 322 (QSIPIFNETGRFSFTLPYPVKIKV) are lumenal. A helical membrane pass occupies residues 323–343 (RFSFFLQIYLIMIFLGLYINF). Topologically, residues 344–362 (RHLYKQRRRRYGQKKKKIH) are cytoplasmic.

The protein belongs to the very long-chain fatty acids dehydratase HACD family. As to quaternary structure, may interact with enzymes of the ELO family (including ELOVL1); with those enzymes that mediate condensation, the first of the four steps of the reaction cycle responsible for fatty acids elongation, may be part of a larger fatty acids elongase complex. Interacts with RAC1. Associates with internalized insulin receptor/INSR complexes on Golgi/endosomal membranes; HACD3/PTPLAD1 together with ATIC and PRKAA2/AMPK2 is proposed to be part of a signaling network regulating INSR autophosphorylation and endocytosis. In terms of tissue distribution, highly expressed in testis, kidney, brain, liver and weakly in skeletal muscle, spleen and heart. No expression detected in leukocytes.

The protein localises to the endoplasmic reticulum membrane. It carries out the reaction a very-long-chain (3R)-3-hydroxyacyl-CoA = a very-long-chain (2E)-enoyl-CoA + H2O. The enzyme catalyses (3R)-hydroxyhexadecanoyl-CoA = (2E)-hexadecenoyl-CoA + H2O. It functions in the pathway lipid metabolism; fatty acid biosynthesis. Its function is as follows. Catalyzes the third of the four reactions of the long-chain fatty acids elongation cycle. This endoplasmic reticulum-bound enzymatic process, allows the addition of two carbons to the chain of long- and very long-chain fatty acids/VLCFAs per cycle. This enzyme catalyzes the dehydration of the 3-hydroxyacyl-CoA intermediate into trans-2,3-enoyl-CoA, within each cycle of fatty acid elongation. Thereby, it participates in the production of VLCFAs of different chain lengths that are involved in multiple biological processes as precursors of membrane lipids and lipid mediators. May be involved in Rac1-signaling pathways leading to the modulation of gene expression. Promotes insulin receptor/INSR autophosphorylation and is involved in INSR internalization. This Homo sapiens (Human) protein is Very-long-chain (3R)-3-hydroxyacyl-CoA dehydratase 3.